The primary structure comprises 509 residues: Heat shock 70 kDa protein 14 (509 aa).

It belongs to the heat shock protein 70 family. Component of ribosome-associated complex (RAC), a heterodimer composed of Hsp70/DnaK-type chaperone HSPA14 and Hsp40/DnaJ-type chaperone DNAJC2.

It localises to the cytoplasm. Its subcellular location is the cytosol. In terms of biological role, component of the ribosome-associated complex (RAC), a complex involved in folding or maintaining nascent polypeptides in a folding-competent state. In the RAC complex, binds to the nascent polypeptide chain, while DNAJC2 stimulates its ATPase activity. The protein is Heat shock 70 kDa protein 14 (HSPA14) of Pongo abelii (Sumatran orangutan).